A 481-amino-acid polypeptide reads, in one-letter code: DNA primase DnaG (481 aa).

The Toprim domain maps to 169 to 243 (DAILVVEGRA…DVDYVARAPD (75 aa)). The Mg(2+) site is built by Glu175, Asp217, and Asp219. Residues 275–393 (RRRNKLAAQA…ARKEREPSEF (119 aa)) form a disordered region. The span at 281–309 (AAQAAEKQAQAEAAQKAEAPAAAAPVQPQ) shows a compositional bias: low complexity. A compositionally biased stretch (basic and acidic residues) spans 312–393 (YQQKEYPQRE…ARKEREPSEF (82 aa)).

This sequence belongs to the archaeal DnaG primase family. As to quaternary structure, forms a ternary complex with MCM helicase and DNA. Component of the archaeal exosome complex. It depends on Mg(2+) as a cofactor.

It carries out the reaction ssDNA + n NTP = ssDNA/pppN(pN)n-1 hybrid + (n-1) diphosphate.. Functionally, RNA polymerase that catalyzes the synthesis of short RNA molecules used as primers for DNA polymerase during DNA replication. Also part of the exosome, which is a complex involved in RNA degradation. Acts as a poly(A)-binding protein that enhances the interaction between heteromeric, adenine-rich transcripts and the exosome. The protein is DNA primase DnaG of Methanocella arvoryzae (strain DSM 22066 / NBRC 105507 / MRE50).